Consider the following 101-residue polypeptide: UPF0358 protein EF_2458 (101 aa).

This sequence belongs to the UPF0358 family.

This chain is UPF0358 protein EF_2458, found in Enterococcus faecalis (strain ATCC 700802 / V583).